Reading from the N-terminus, the 417-residue chain is Calreticulin (417 aa).

The signal sequence occupies residues 1–17; the sequence is MLLSVPLLLGLLGLAVA. Residues 18-197 form an N-domain region; sequence EPAVYFKEQF…NSQVESGSLE (180 aa). A Ca(2+)-binding site is contributed by glutamine 26. Lysine 48 is modified (N6-acetyllysine). Ca(2+) is bound by residues lysine 62 and lysine 64. N6-(2-hydroxyisobutyryl)lysine is present on lysine 64. Cysteine 105 and cysteine 137 are disulfide-bonded. An alpha-D-glucoside-binding residues include tyrosine 109, lysine 111, tyrosine 128, and aspartate 135. An N6-acetyllysine modification is found at lysine 159. A 1-1 repeat occupies 191–202; the sequence is VESGSLEDDWDF. Residues 191-255 form a 4 X approximate repeats region; sequence VESGSLEDDW…DAKKPEDWDE (65 aa). The interval 193-278 is disordered; it reads SGSLEDDWDF…PEYKGEWKPR (86 aa). The tract at residues 198-308 is P-domain; the sequence is DDWDFLPPKK…YSPDPSIYAY (111 aa). Residues 207–251 are compositionally biased toward basic and acidic residues; that stretch reads KIKDPDASKPEDWDERAKIDDPTDSKPEDWDKPEHIPDPDAKKPE. The residue at position 209 (lysine 209) is an N6-acetyllysine. 6 tandem repeats follow at residues 210 to 221, 227 to 238, 244 to 255, 259 to 269, 273 to 283, and 287 to 297. Residues 237-270 are interaction with PPIB; sequence DKPEHIPDPDAKKPEDWDEEMDGEWEPPVIQNPE. A compositionally biased stretch (acidic residues) spans 252–261; it reads DWDEEMDGEW. The tract at residues 259 to 297 is 3 X approximate repeats; sequence GEWEPPVIQNPEYKGEWKPRQIDNPDYKGTWIHPEIDNP. Residues 309–417 are C-domain; the sequence is DNFGVLGLDL…DVPGQAKDEL (109 aa). Residue aspartate 317 coordinates an alpha-D-glucoside. Residue aspartate 328 coordinates Ca(2+). An N-linked (GlcNAc...) asparagine glycan is attached at asparagine 344. Residues 350-417 are disordered; the sequence is TKAAEKQMKD…DVPGQAKDEL (68 aa). Residues 352 to 379 are compositionally biased toward basic and acidic residues; sequence AAEKQMKDKQDEEQRLKEEEEDKKRKEE. The segment covering 380–409 has biased composition (acidic residues); sequence EEAEDKEDDEDKDEDEEDEEDKEEDEEEDV. A Prevents secretion from ER motif is present at residues 414–417; sequence KDEL.

The protein belongs to the calreticulin family. In terms of assembly, monomer. Component of an EIF2 complex at least composed of CELF1/CUGBP1, CALR, CALR3, EIF2S1, EIF2S2, HSP90B1 and HSPA5. Interacts with PDIA3/ERp57 and SPACA9. Interacts with TRIM21. Interacts with NR3C1. Interacts with PPIB. Interacts (via P-domain) with PDIA5. Interacts with GABARAP. Interacts with HLA-E-B2M and HLA-G-B2M complexes. Interacts with HLA-F. Interacts with CLCC1.

It localises to the endoplasmic reticulum lumen. The protein localises to the cytoplasm. It is found in the cytosol. The protein resides in the secreted. Its subcellular location is the extracellular space. It localises to the extracellular matrix. The protein localises to the cell surface. It is found in the sarcoplasmic reticulum lumen. The protein resides in the cytoplasmic vesicle. Its subcellular location is the secretory vesicle. It localises to the cortical granule. The protein localises to the cytolytic granule. In terms of biological role, calcium-binding chaperone that promotes folding, oligomeric assembly and quality control in the endoplasmic reticulum (ER) via the calreticulin/calnexin cycle. This lectin interacts transiently with almost all of the monoglucosylated glycoproteins that are synthesized in the ER. Interacts with the DNA-binding domain of NR3C1 and mediates its nuclear export. Involved in maternal gene expression regulation. May participate in oocyte maturation via the regulation of calcium homeostasis. Present in the cortical granules of non-activated oocytes, is exocytosed during the cortical reaction in response to oocyte activation and might participate in the block to polyspermy. The sequence is that of Calreticulin from Homo sapiens (Human).